We begin with the raw amino-acid sequence, 356 residues long: Alanine racemase (356 aa).

Residue Lys-34 is the Proton acceptor; specific for D-alanine of the active site. N6-(pyridoxal phosphate)lysine is present on Lys-34. Residue Arg-129 participates in substrate binding. Catalysis depends on Tyr-253, which acts as the Proton acceptor; specific for L-alanine. Met-301 lines the substrate pocket.

It belongs to the alanine racemase family. Requires pyridoxal 5'-phosphate as cofactor.

The catalysed reaction is L-alanine = D-alanine. It participates in amino-acid biosynthesis; D-alanine biosynthesis; D-alanine from L-alanine: step 1/1. Functionally, catalyzes the interconversion of L-alanine and D-alanine. May also act on other amino acids. This Nitrosococcus oceani (strain ATCC 19707 / BCRC 17464 / JCM 30415 / NCIMB 11848 / C-107) protein is Alanine racemase (alr).